The primary structure comprises 784 residues: Ribosome biogenesis protein BOP1 homolog (784 aa).

Residues 1–11 (MTKKLALKRRG) are compositionally biased toward basic residues. The interval 1-159 (MTKKLALKRR…DSDTSDEEDI (159 aa)) is disordered. Acidic residues-rich tracts occupy residues 27-36 (SENEEEEEDL), 45-54 (EDSTDDEGID), 62-73 (SEELQFESDEEG), and 84-111 (AEED…EDEE). Basic and acidic residues-rich tracts occupy residues 112 to 123 (KVSKSKQSDDKP) and 138 to 148 (LPKRDSSKPEY). Residues 149–158 (QDSDTSDEED) show a composition bias toward acidic residues. 7 WD repeats span residues 445-486 (GHTD…RTIE), 488-526 (DEVV…KVLV), 570-612 (THFK…SQIP), 615-653 (KSKG…LVKK), 656-695 (TNSK…KPYQ), 699-738 (LHRN…DLLQ), and 754-784 (RDEF…RLYT).

Belongs to the WD repeat BOP1/ERB1 family.

Its subcellular location is the nucleus. It localises to the nucleolus. The protein localises to the nucleoplasm. Functionally, required for maturation of ribosomal RNAs and formation of the large ribosomal subunit. The chain is Ribosome biogenesis protein BOP1 homolog from Drosophila sechellia (Fruit fly).